The primary structure comprises 156 residues: Homeobox-leucine zipper protein ATHB-52 (156 aa).

Positions 8 to 67 (GKNKKKRLTQDQVRQLEKCFTMNKKLEPDLKLQLSNQLGLPQRQVAVWFQNKRARFKTQS) form a DNA-binding region, homeobox. Residues 68 to 96 (LEVQHCTLQSKHEAALSDKAKLEHQVQFL) form a leucine-zipper region.

Belongs to the HD-ZIP homeobox family. Class I subfamily. As to expression, expressed in roots and flowers.

It is found in the nucleus. In terms of biological role, probable transcription factor. This is Homeobox-leucine zipper protein ATHB-52 (ATHB-52) from Arabidopsis thaliana (Mouse-ear cress).